The following is an 80-amino-acid chain: RNA-binding protein Hfq (80 aa).

The region spanning 10–70 (DLFLNTVRKQ…ISTIMPGQPL (61 aa)) is the Sm domain.

It belongs to the Hfq family. Homohexamer.

Functionally, RNA chaperone that binds small regulatory RNA (sRNAs) and mRNAs to facilitate mRNA translational regulation in response to envelope stress, environmental stress and changes in metabolite concentrations. Also binds with high specificity to tRNAs. The polypeptide is RNA-binding protein Hfq (Rhizobium meliloti (strain 1021) (Ensifer meliloti)).